Reading from the N-terminus, the 900-residue chain is Alanine--tRNA ligase (900 aa).

Zn(2+)-binding residues include H604, H608, C708, and H712.

The protein belongs to the class-II aminoacyl-tRNA synthetase family. The cofactor is Zn(2+).

Its subcellular location is the cytoplasm. The catalysed reaction is tRNA(Ala) + L-alanine + ATP = L-alanyl-tRNA(Ala) + AMP + diphosphate. Catalyzes the attachment of alanine to tRNA(Ala) in a two-step reaction: alanine is first activated by ATP to form Ala-AMP and then transferred to the acceptor end of tRNA(Ala). Also edits incorrectly charged Ser-tRNA(Ala) and Gly-tRNA(Ala) via its editing domain. This chain is Alanine--tRNA ligase, found in Saccharolobus islandicus (strain Y.G.57.14 / Yellowstone #1) (Sulfolobus islandicus).